The chain runs to 441 residues: Arginine biosynthesis bifunctional protein ArgJ, mitochondrial (441 aa).

Thr-178, Lys-204, Thr-215, Glu-304, Asn-436, and Ser-441 together coordinate substrate. The active-site Nucleophile is Thr-215.

The protein belongs to the ArgJ family. As to quaternary structure, heterodimer of an alpha and a beta chain. The alpha and beta chains are autoproteolytically processed from a single precursor protein within the mitochondrion.

The protein localises to the mitochondrion matrix. The enzyme catalyses N(2)-acetyl-L-ornithine + L-glutamate = N-acetyl-L-glutamate + L-ornithine. It carries out the reaction L-glutamate + acetyl-CoA = N-acetyl-L-glutamate + CoA + H(+). The protein operates within amino-acid biosynthesis; L-arginine biosynthesis; L-ornithine and N-acetyl-L-glutamate from L-glutamate and N(2)-acetyl-L-ornithine (cyclic): step 1/1. It participates in amino-acid biosynthesis; L-arginine biosynthesis; N(2)-acetyl-L-ornithine from L-glutamate: step 1/4. Functionally, catalyzes two activities which are involved in the cyclic version of arginine biosynthesis: the synthesis of acetylglutamate from glutamate and acetyl-CoA, and of ornithine by transacetylation between acetylornithine and glutamate. This is Arginine biosynthesis bifunctional protein ArgJ, mitochondrial from Lodderomyces elongisporus (strain ATCC 11503 / CBS 2605 / JCM 1781 / NBRC 1676 / NRRL YB-4239) (Yeast).